We begin with the raw amino-acid sequence, 358 residues long: UDP-N-acetylglucosamine--N-acetylmuramyl-(pentapeptide) pyrophosphoryl-undecaprenol N-acetylglucosamine transferase (358 aa).

Residues Thr-13–Gly-15, Asn-125, Arg-161, Ser-189, Ile-244, and Gln-288 contribute to the UDP-N-acetyl-alpha-D-glucosamine site.

The protein belongs to the glycosyltransferase 28 family. MurG subfamily.

It localises to the cell membrane. It catalyses the reaction di-trans,octa-cis-undecaprenyl diphospho-N-acetyl-alpha-D-muramoyl-L-alanyl-D-glutamyl-meso-2,6-diaminopimeloyl-D-alanyl-D-alanine + UDP-N-acetyl-alpha-D-glucosamine = di-trans,octa-cis-undecaprenyl diphospho-[N-acetyl-alpha-D-glucosaminyl-(1-&gt;4)]-N-acetyl-alpha-D-muramoyl-L-alanyl-D-glutamyl-meso-2,6-diaminopimeloyl-D-alanyl-D-alanine + UDP + H(+). Its pathway is cell wall biogenesis; peptidoglycan biosynthesis. Its function is as follows. Cell wall formation. Catalyzes the transfer of a GlcNAc subunit on undecaprenyl-pyrophosphoryl-MurNAc-pentapeptide (lipid intermediate I) to form undecaprenyl-pyrophosphoryl-MurNAc-(pentapeptide)GlcNAc (lipid intermediate II). This is UDP-N-acetylglucosamine--N-acetylmuramyl-(pentapeptide) pyrophosphoryl-undecaprenol N-acetylglucosamine transferase from Baumannia cicadellinicola subsp. Homalodisca coagulata.